The chain runs to 440 residues: Proton extrusion protein PxcA (440 aa).

The next 4 membrane-spanning stretches (helical) occupy residues 222-242 (FVLT…TFFL), 316-336 (NAIA…LVLV), 352-374 (IVYG…MFVG), and 400-420 (FNFL…KYWI).

It belongs to the CemA family.

It is found in the cell inner membrane. Functionally, required for H(+) efflux immediately after light irradiation to form a rapid H(+) concentration gradient across the thylakoid membranes. Together with PxcL, contributes to transient H(+) uptake following dark to light transition. Involved in light-induced Na(+)-dependent proton extrusion. Also seems to be involved in CO(2) transport. The sequence is that of Proton extrusion protein PxcA from Synechocystis sp. (strain ATCC 27184 / PCC 6803 / Kazusa).